The sequence spans 90 residues: uncharacterized protein (90 aa).

Residues 12–32 traverse the membrane as a helical segment; it reads VVGGLSFWSFSAGVIMIVNAF.

The protein localises to the membrane. This is an uncharacterized protein from Mycoplasma pneumoniae (strain ATCC 29342 / M129 / Subtype 1) (Mycoplasmoides pneumoniae).